A 98-amino-acid chain; its full sequence is NADH-ubiquinone oxidoreductase chain 4L (98 aa).

The next 3 helical transmembrane spans lie at 2 to 22 (PSISINITLAFTMALTGMLVF), 29 to 49 (SLLCLEGMMLSMFILSILFIM), and 61 to 81 (ILLLVLAACEAAIGLALLVMV).

This sequence belongs to the complex I subunit 4L family. Core subunit of respiratory chain NADH dehydrogenase (Complex I) which is composed of 45 different subunits.

Its subcellular location is the mitochondrion inner membrane. The catalysed reaction is a ubiquinone + NADH + 5 H(+)(in) = a ubiquinol + NAD(+) + 4 H(+)(out). Core subunit of the mitochondrial membrane respiratory chain NADH dehydrogenase (Complex I) which catalyzes electron transfer from NADH through the respiratory chain, using ubiquinone as an electron acceptor. Part of the enzyme membrane arm which is embedded in the lipid bilayer and involved in proton translocation. This chain is NADH-ubiquinone oxidoreductase chain 4L (MT-ND4L), found in Lepilemur mitsinjoensis (Mitsinjo sportive lemur).